The sequence spans 210 residues: Phosphoheptose isomerase (210 aa).

Residues 38–202 (IAACLARGGK…ENVAALAPYL (165 aa)) enclose the SIS domain. 53 to 55 (NGG) lines the substrate pocket. Residues histidine 62 and glutamate 66 each coordinate Zn(2+). Residues glutamate 66, 95–96 (ND), 121–123 (STS), serine 126, and glutamine 173 each bind substrate. Positions 173 and 181 each coordinate Zn(2+).

It belongs to the SIS family. GmhA subfamily. Homotetramer. The cofactor is Zn(2+).

Its subcellular location is the cytoplasm. It carries out the reaction 2 D-sedoheptulose 7-phosphate = D-glycero-alpha-D-manno-heptose 7-phosphate + D-glycero-beta-D-manno-heptose 7-phosphate. It functions in the pathway carbohydrate biosynthesis; D-glycero-D-manno-heptose 7-phosphate biosynthesis; D-glycero-alpha-D-manno-heptose 7-phosphate and D-glycero-beta-D-manno-heptose 7-phosphate from sedoheptulose 7-phosphate: step 1/1. Catalyzes the isomerization of sedoheptulose 7-phosphate in D-glycero-D-manno-heptose 7-phosphate. In Desulfovibrio desulfuricans (strain ATCC 27774 / DSM 6949 / MB), this protein is Phosphoheptose isomerase.